Consider the following 501-residue polypeptide: L-arabinose isomerase (501 aa).

Residues E306, E333, H350, and H450 each contribute to the Mn(2+) site.

The protein belongs to the arabinose isomerase family. As to quaternary structure, homohexamer. Mn(2+) serves as cofactor.

It carries out the reaction beta-L-arabinopyranose = L-ribulose. Its pathway is carbohydrate degradation; L-arabinose degradation via L-ribulose; D-xylulose 5-phosphate from L-arabinose (bacterial route): step 1/3. Catalyzes the conversion of L-arabinose to L-ribulose. The sequence is that of L-arabinose isomerase from Pectobacterium atrosepticum (strain SCRI 1043 / ATCC BAA-672) (Erwinia carotovora subsp. atroseptica).